The sequence spans 274 residues: Thiamine kinase (274 aa).

This sequence belongs to the thiamine kinase family.

It carries out the reaction thiamine + ATP = thiamine phosphate + ADP + H(+). The protein operates within cofactor biosynthesis; thiamine diphosphate biosynthesis; thiamine phosphate from thiamine: step 1/1. Functionally, catalyzes the ATP-dependent phosphorylation of thiamine to thiamine phosphate. Is involved in thiamine salvage. This is Thiamine kinase from Salmonella typhimurium (strain LT2 / SGSC1412 / ATCC 700720).